A 246-amino-acid polypeptide reads, in one-letter code: Probable transcriptional regulatory protein RD1_2018 (246 aa).

This sequence belongs to the TACO1 family.

It localises to the cytoplasm. The sequence is that of Probable transcriptional regulatory protein RD1_2018 from Roseobacter denitrificans (strain ATCC 33942 / OCh 114) (Erythrobacter sp. (strain OCh 114)).